The chain runs to 387 residues: Eukaryotic translation initiation factor 3 subunit M (387 aa).

The PCI domain maps to 181–340 (LSSKVMIELL…RKVHISSTMH (160 aa)).

The protein belongs to the eIF-3 subunit M family. Component of the eukaryotic translation initiation factor 3 (eIF-3) complex. The eIF-3 complex interacts with pix.

It is found in the cytoplasm. Its subcellular location is the golgi apparatus. In terms of biological role, component of the eukaryotic translation initiation factor 3 (eIF-3) complex, which is involved in protein synthesis of a specialized repertoire of mRNAs and, together with other initiation factors, stimulates binding of mRNA and methionyl-tRNAi to the 40S ribosome. The eIF-3 complex specifically targets and initiates translation of a subset of mRNAs involved in cell proliferation. This Drosophila persimilis (Fruit fly) protein is Eukaryotic translation initiation factor 3 subunit M.